The primary structure comprises 230 residues: Cytidylate kinase (230 aa).

12–20 contributes to the ATP binding site; the sequence is GPSGAGKST.

It belongs to the cytidylate kinase family. Type 1 subfamily.

Its subcellular location is the cytoplasm. It catalyses the reaction CMP + ATP = CDP + ADP. The catalysed reaction is dCMP + ATP = dCDP + ADP. The polypeptide is Cytidylate kinase (Corynebacterium diphtheriae (strain ATCC 700971 / NCTC 13129 / Biotype gravis)).